The sequence spans 286 residues: MQISDFILVIIGSVALAAGVKYVFTLTSGSNKDKKGGEAEKGKQVEKALDPQEYRKFQLKEKFIVNHNTRIFRFALPNEDDILGLPIGQHISLRAVVGGKEVYRPYTPISSDEERGYFDLLIKVYEKGAMSGYVDNMFIGDSIEVKGPKGKFNYQPNMRKSIGMLAGGTGITPMLQVIKAILKNPSDKTEISLVFGNITEEDILLKKELDELAEKHPQFKVYYVLNNPPKGWTQGVGFVSKEIIESRLPSPSDQTMVIMCGPPMMNKAMTGHLETIGFNESNIFTF.

Residues 6 to 26 (FILVIIGSVALAAGVKYVFTL) form a helical membrane-spanning segment. One can recognise an FAD-binding FR-type domain in the interval 52 to 155 (QEYRKFQLKE…KGPKGKFNYQ (104 aa)). FAD-binding positions include 135–150 (DNMF…GPKG) and 161–193 (SIGM…EISL).

This sequence belongs to the flavoprotein pyridine nucleotide cytochrome reductase family. Monomer. FAD is required as a cofactor.

The protein localises to the endoplasmic reticulum membrane. The protein resides in the mitochondrion outer membrane. The enzyme catalyses 2 Fe(III)-[cytochrome b5] + NADH = 2 Fe(II)-[cytochrome b5] + NAD(+) + H(+). Electron donor reductase for cytochrome b5. The cytochrome b5/NADH cytochrome b5 reductase electron transfer system supports the catalytic activity of several sterol biosynthetic enzymes. In Dictyostelium discoideum (Social amoeba), this protein is NADH-cytochrome b5 reductase 1 (cyb5r1).